The primary structure comprises 496 residues: Glutamyl-tRNA(Gln) amidotransferase subunit A (496 aa).

Catalysis depends on charge relay system residues Lys75 and Ser150. The active-site Acyl-ester intermediate is Ser174.

It belongs to the amidase family. GatA subfamily. As to quaternary structure, heterotrimer of A, B and C subunits.

It carries out the reaction L-glutamyl-tRNA(Gln) + L-glutamine + ATP + H2O = L-glutaminyl-tRNA(Gln) + L-glutamate + ADP + phosphate + H(+). In terms of biological role, allows the formation of correctly charged Gln-tRNA(Gln) through the transamidation of misacylated Glu-tRNA(Gln) in organisms which lack glutaminyl-tRNA synthetase. The reaction takes place in the presence of glutamine and ATP through an activated gamma-phospho-Glu-tRNA(Gln). The chain is Glutamyl-tRNA(Gln) amidotransferase subunit A from Burkholderia ambifaria (strain MC40-6).